The sequence spans 226 residues: Octanoyltransferase (226 aa).

The BPL/LPL catalytic domain occupies 31-226; the sequence is PETPDALWIC…SQKLGTYLAP (196 aa). Residues 70-77, 159-161, and 172-174 contribute to the substrate site; these read RGGQVTFH, ALG, and GVA. C190 acts as the Acyl-thioester intermediate in catalysis.

It belongs to the LipB family.

It is found in the cytoplasm. The enzyme catalyses octanoyl-[ACP] + L-lysyl-[protein] = N(6)-octanoyl-L-lysyl-[protein] + holo-[ACP] + H(+). It participates in protein modification; protein lipoylation via endogenous pathway; protein N(6)-(lipoyl)lysine from octanoyl-[acyl-carrier-protein]: step 1/2. In terms of biological role, catalyzes the transfer of endogenously produced octanoic acid from octanoyl-acyl-carrier-protein onto the lipoyl domains of lipoate-dependent enzymes. Lipoyl-ACP can also act as a substrate although octanoyl-ACP is likely to be the physiological substrate. The chain is Octanoyltransferase from Variovorax paradoxus (strain S110).